The sequence spans 70 residues: Sec-independent protein translocase protein TatA (70 aa).

A helical membrane pass occupies residues 1-21; the sequence is MGSFSIWHWLIVLVVVLLIFG. Positions 46–70 are disordered; it reads DAPKISESDKGGHTIDAEVKDKQNS.

This sequence belongs to the TatA/E family. In terms of assembly, the Tat system comprises two distinct complexes: a TatABC complex, containing multiple copies of TatA, TatB and TatC subunits, and a separate TatA complex, containing only TatA subunits. Substrates initially bind to the TatABC complex, which probably triggers association of the separate TatA complex to form the active translocon.

It localises to the cell inner membrane. Its function is as follows. Part of the twin-arginine translocation (Tat) system that transports large folded proteins containing a characteristic twin-arginine motif in their signal peptide across membranes. TatA could form the protein-conducting channel of the Tat system. This is Sec-independent protein translocase protein TatA from Thiobacillus denitrificans (strain ATCC 25259 / T1).